We begin with the raw amino-acid sequence, 247 residues long: tRNA pseudouridine synthase A 1 (247 aa).

Catalysis depends on Asp-53, which acts as the Nucleophile. A substrate-binding site is contributed by Tyr-111.

Belongs to the tRNA pseudouridine synthase TruA family. As to quaternary structure, homodimer.

The catalysed reaction is uridine(38/39/40) in tRNA = pseudouridine(38/39/40) in tRNA. Functionally, formation of pseudouridine at positions 38, 39 and 40 in the anticodon stem and loop of transfer RNAs. The protein is tRNA pseudouridine synthase A 1 of Bacillus cereus (strain ATCC 10987 / NRS 248).